The sequence spans 131 residues: Agouti-signaling protein (131 aa).

Residues 1 to 22 (MDVTRLLLATLVGFLCFLTVHS) form the signal peptide. N-linked (GlcNAc...) asparagine glycosylation occurs at Asn-39. Residues 58–96 (KSKKISRKEAEKRKRSSKKKASIKKVARPPPPSPCVATR) form a disordered region. Residues 70–84 (RKRSSKKKASIKKVA) are compositionally biased toward basic residues. 5 cysteine pairs are disulfide-bonded: Cys-92–Cys-107, Cys-99–Cys-113, Cys-106–Cys-124, Cys-110–Cys-131, and Cys-115–Cys-122. One can recognise an Agouti domain in the interval 92-131 (CVATRDSCKPPAPACCNPCASCQCRFFGSACTCRVLNPNC).

The protein resides in the secreted. In terms of biological role, involved in the regulation of melanogenesis. The binding of ASP to MC1R precludes alpha-MSH initiated signaling and thus blocks production of cAMP, leading to a down-regulation of eumelanogenesis (brown/black pigment) and thus increasing synthesis of pheomelanin (yellow/red pigment). The protein is Agouti-signaling protein of Rattus norvegicus (Rat).